Here is a 209-residue protein sequence, read N- to C-terminus: Imidazole glycerol phosphate synthase subunit HisH (209 aa).

A Glutamine amidotransferase type-1 domain is found at 1 to 205; it reads MIAIIDYGMG…KGVVETWKSS (205 aa). Cysteine 79 functions as the Nucleophile in the catalytic mechanism. Residues histidine 180 and glutamate 182 contribute to the active site.

Heterodimer of HisH and HisF.

Its subcellular location is the cytoplasm. The enzyme catalyses 5-[(5-phospho-1-deoxy-D-ribulos-1-ylimino)methylamino]-1-(5-phospho-beta-D-ribosyl)imidazole-4-carboxamide + L-glutamine = D-erythro-1-(imidazol-4-yl)glycerol 3-phosphate + 5-amino-1-(5-phospho-beta-D-ribosyl)imidazole-4-carboxamide + L-glutamate + H(+). It carries out the reaction L-glutamine + H2O = L-glutamate + NH4(+). Its pathway is amino-acid biosynthesis; L-histidine biosynthesis; L-histidine from 5-phospho-alpha-D-ribose 1-diphosphate: step 5/9. In terms of biological role, IGPS catalyzes the conversion of PRFAR and glutamine to IGP, AICAR and glutamate. The HisH subunit catalyzes the hydrolysis of glutamine to glutamate and ammonia as part of the synthesis of IGP and AICAR. The resulting ammonia molecule is channeled to the active site of HisF. In Bacillus thuringiensis subsp. konkukian (strain 97-27), this protein is Imidazole glycerol phosphate synthase subunit HisH.